Consider the following 62-residue polypeptide: Amolopin-P2 (62 aa).

Residues 1–22 form the signal peptide; the sequence is MFTLKKSLLLLFFLGTISLSLC. The propeptide occupies 23–44; that stretch reads EQERGADEEENGGEVTEQEVKR.

Belongs to the frog skin active peptide (FSAP) family. Amolopin subfamily. Expressed by the skin glands.

It is found in the secreted. In terms of biological role, antimicrobial peptide with activity against Gram-positive bacteria. Has been tested against S.aureus (MIC=37.5 ug/mL), against B.pumilus (MIC=75.0 ug/mL), B.cereus (no activity detected). Does not show activity against Gram-negative bacteria (E.coli, B.dysenteriae, A.calcoaceticus, P.aeruginosa) and fungi (C.albicans). Does not show hemolytic activity against rabbit erythrocytes. This chain is Amolopin-P2, found in Amolops loloensis (Lolokou Sucker Frog).